Reading from the N-terminus, the 416-residue chain is Leu/Ile/Val-binding protein homolog 4 (416 aa).

The first 26 residues, 1–26 (MSLKVFLQAGVACAALSLAGAAGASA), serve as a signal peptide directing secretion.

It belongs to the leucine-binding protein family.

Functionally, component of an amino-acid transport system. This is Leu/Ile/Val-binding protein homolog 4 from Brucella melitensis biotype 1 (strain ATCC 23456 / CCUG 17765 / NCTC 10094 / 16M).